A 311-amino-acid chain; its full sequence is Pyrimidine-specific ribonucleoside hydrolase RihA (311 aa).

Histidine 240 is an active-site residue.

Belongs to the IUNH family. RihA subfamily.

Its function is as follows. Hydrolyzes cytidine or uridine to ribose and cytosine or uracil, respectively. The sequence is that of Pyrimidine-specific ribonucleoside hydrolase RihA from Salmonella newport (strain SL254).